Reading from the N-terminus, the 2470-residue chain is Serine/threonine-protein kinase mTor (2470 aa).

HEAT repeat units follow at residues 172 to 209 (QHIL…VTAQ), 746 to 785 (SYMN…VNGG), 791 to 829 (LWAD…ATGR), 835 to 873 (HKYP…MDPY), 962 to 999 (PYLA…FVKL), 1043 to 1080 (DYLA…FGST), 1083 to 1122 (YYLP…QLDF), and 1124 to 1160 (DFSS…QLGK). The region spanning 1349 to 1903 (LLGTRAMACR…VYPLTVASKS (555 aa)) is the FAT domain. 2 TPR repeats span residues 1407–1440 (ANEL…DSSD) and 1718–1751 (MATW…DPNW). The stretch at 1854–1891 (NTWLQVIPQLIARIDTHRQLVGQLIHQLLMDIGKNHPQ) is one HEAT 9 repeat. A PI3K/PI4K catalytic domain is found at 2077–2389 (IKTNLQVITS…SLSNSVEDSL (313 aa)). The tract at residues 2083 to 2089 (VITSKQR) is G-loop. Residues 2256–2264 (GLGDRHPSN) form a catalytic loop region. An activation loop region spans residues 2276–2301 (HIDFGDCFEVAMTREKFPEKIPFRLT). Positions 2364–2389 (AGAGAPGGRGGSGMQDSLSNSVEDSL) are disordered. Residues 2367 to 2376 (GAPGGRGGSG) show a composition bias toward gly residues. The segment covering 2377–2386 (MQDSLSNSVE) has biased composition (polar residues). The region spanning 2438 to 2470 (KSVNEQSQVELLIQQATNNENLCQCYIGWCPFW) is the FATC domain.

Belongs to the PI3/PI4-kinase family. In terms of assembly, may be part of a minimal complex, TORC1, consisting of mTor, raptor and lst8. May be part of a minimal complex, TORC2, consisting of mTor, rictor and lst8. Self-associates; assembles into homomultimeric complexes. Component of a multiprotein complex.

It catalyses the reaction L-seryl-[protein] + ATP = O-phospho-L-seryl-[protein] + ADP + H(+). The enzyme catalyses L-threonyl-[protein] + ATP = O-phospho-L-threonyl-[protein] + ADP + H(+). Promotes cell and tissue growth, maintains tissue homeostatis and controls responses to environmental stress and aging. Regulates growth during animal development by coupling growth factor signaling to nutrient availability. Central regulators of autophagy. May be involved in atg1 phosphorylation. May also be involved, directly or indirectly, in the control of neuronal function. Phosphorylates S6K/p70S6K, in vitro. May regulate the activity of S6K. Overexpression inhibits growth and reduces cell size. Affects the timing of neuronal cell differentiation. Hyperactivation of the signaling leads to accelerated differentiation, whereas inhibition of the signaling retards differentiation. Thus, in addition to controlling growth of the cell in which it resides, it can also influence growth of distant cells and organs during development via a humoral mechanism. As part of the TORC1 complex regulates energy homeostasis and promotes certain aspects of larval growth by negatively regulating REPTOR. REPTOR functions downstream of TORC1 to regulate the expression of stress response genes in response to TORC1 inhibition resulting from nutrient deprivation. When TORC1 activity is high it phosphorylates REPTOR which inhibits its recruitment into the nucleus and antagonizes their function. This function is essential under normal feeding conditions to promote TORC1-dependent growth during larval development and, in adults and larvae to prevent the REPTOR-dependent expression of nutrient stress response genes. In short, during development, it primarily controls growth, whereas in the adult, where there is relatively little growth, it controls aging and other aspects of nutrient-related physiology. Rag GTPases act as activators of TORC1 in response to amino acid signals. The sequence is that of Serine/threonine-protein kinase mTor from Drosophila melanogaster (Fruit fly).